Reading from the N-terminus, the 1221-residue chain is DNA-directed RNA polymerase subunit beta' (1221 aa).

Positions 60, 62, 75, and 78 each coordinate Zn(2+). Residues aspartate 449, aspartate 451, and aspartate 453 each coordinate Mg(2+). Zn(2+) is bound by residues cysteine 821, cysteine 896, cysteine 903, and cysteine 906.

Belongs to the RNA polymerase beta' chain family. As to quaternary structure, the RNAP catalytic core consists of 2 alpha, 1 beta, 1 beta' and 1 omega subunit. When a sigma factor is associated with the core the holoenzyme is formed, which can initiate transcription. Requires Mg(2+) as cofactor. The cofactor is Zn(2+).

The enzyme catalyses RNA(n) + a ribonucleoside 5'-triphosphate = RNA(n+1) + diphosphate. Its function is as follows. DNA-dependent RNA polymerase catalyzes the transcription of DNA into RNA using the four ribonucleoside triphosphates as substrates. In Lactobacillus delbrueckii subsp. bulgaricus (strain ATCC BAA-365 / Lb-18), this protein is DNA-directed RNA polymerase subunit beta'.